The following is a 143-amino-acid chain: Large ribosomal subunit protein uL13 (143 aa).

The protein belongs to the universal ribosomal protein uL13 family. Part of the 50S ribosomal subunit.

This protein is one of the early assembly proteins of the 50S ribosomal subunit, although it is not seen to bind rRNA by itself. It is important during the early stages of 50S assembly. The protein is Large ribosomal subunit protein uL13 of Methylacidiphilum infernorum (isolate V4) (Methylokorus infernorum (strain V4)).